The chain runs to 303 residues: Serine/threonine-protein phosphatase 6 catalytic subunit (303 aa).

Mn(2+) contacts are provided by aspartate 51, histidine 53, aspartate 79, and asparagine 111. Histidine 112 functions as the Proton donor in the catalytic mechanism. Residues histidine 161 and histidine 235 each contribute to the Mn(2+) site.

Belongs to the PPP phosphatase family. PP-6 (PP-V) subfamily. Mn(2+) serves as cofactor.

The protein resides in the cytoplasm. The catalysed reaction is O-phospho-L-seryl-[protein] + H2O = L-seryl-[protein] + phosphate. The enzyme catalyses O-phospho-L-threonyl-[protein] + H2O = L-threonyl-[protein] + phosphate. In terms of biological role, may be involved in controlling cellularization or in regulating transcription of the genes involved in this process. The chain is Serine/threonine-protein phosphatase 6 catalytic subunit (PpV) from Drosophila melanogaster (Fruit fly).